The primary structure comprises 254 residues: Dihydroorotate dehydrogenase B (NAD(+)), electron transfer subunit (254 aa).

An FAD-binding FR-type domain is found at 1–99; that stretch reads MLQTEMKVIQ…LGPLGKGFDI (99 aa). Residues 50 to 53, 67 to 69, and 74 to 75 each bind FAD; these read RPIS, LYR, and GT. [2Fe-2S] cluster-binding residues include C218, C223, C226, and C241.

This sequence belongs to the PyrK family. Heterotetramer of 2 PyrK and 2 PyrD type B subunits. Requires [2Fe-2S] cluster as cofactor. FAD is required as a cofactor.

It functions in the pathway pyrimidine metabolism; UMP biosynthesis via de novo pathway; orotate from (S)-dihydroorotate (NAD(+) route): step 1/1. In terms of biological role, responsible for channeling the electrons from the oxidation of dihydroorotate from the FMN redox center in the PyrD type B subunit to the ultimate electron acceptor NAD(+). The protein is Dihydroorotate dehydrogenase B (NAD(+)), electron transfer subunit of Listeria monocytogenes serotype 4b (strain F2365).